The chain runs to 304 residues: MSHLLTMSELSEVEISEILKDAEDFANGKESKTTEQTFVANLFFENSTRTRFSFEVAEKRLGLDVLNFSADASSVQKGETLYDTIRTLESIGTKAVVIRHEQDRYFDELKDQVNIPILNAGDGCGNHPTQCLLDLLTIKQEFGRFEGLKIAIVGDVRHSRVARSNAEALTKLGATIYFASPEEWKDEDNTFGTYKPLDELVPEVDVMMLLRVQHERHDHYETDIMKEYHEKHGLTVEREQRMKEGSIIMHPAPVNRDVEIASELVECERSRIFKQMENGVYVRMAVLKRALPNVLGGMKHELLV.

Residues Arg-49 and Thr-50 each coordinate carbamoyl phosphate. Lys-77 provides a ligand contact to L-aspartate. Positions 99, 127, and 130 each coordinate carbamoyl phosphate. The L-aspartate site is built by Arg-160 and Arg-211. Residues Ala-252 and Pro-253 each coordinate carbamoyl phosphate.

It belongs to the aspartate/ornithine carbamoyltransferase superfamily. ATCase family. As to quaternary structure, heterododecamer (2C3:3R2) of six catalytic PyrB chains organized as two trimers (C3), and six regulatory PyrI chains organized as three dimers (R2).

The enzyme catalyses carbamoyl phosphate + L-aspartate = N-carbamoyl-L-aspartate + phosphate + H(+). The protein operates within pyrimidine metabolism; UMP biosynthesis via de novo pathway; (S)-dihydroorotate from bicarbonate: step 2/3. Catalyzes the condensation of carbamoyl phosphate and aspartate to form carbamoyl aspartate and inorganic phosphate, the committed step in the de novo pyrimidine nucleotide biosynthesis pathway. This chain is Aspartate carbamoyltransferase catalytic subunit, found in Bacillus cereus (strain ATCC 10987 / NRS 248).